The chain runs to 334 residues: TPR repeat-containing protein MJ0798 (334 aa).

7 TPR repeats span residues 102–135 (WKLW…NQNT), 137–168 (LLCK…DRNN), 169–202 (YKAL…NPND), 204–235 (EALE…KPDD), 236–269 (IDLI…NPNV), 273–306 (EQIY…NLYH), and 308–333 (EIYE…YKKL).

In Methanocaldococcus jannaschii (strain ATCC 43067 / DSM 2661 / JAL-1 / JCM 10045 / NBRC 100440) (Methanococcus jannaschii), this protein is TPR repeat-containing protein MJ0798.